The chain runs to 272 residues: MSTVDQSTVTTALSSSSSNRHQGNDTYSIPKHSGTTSTITITMNEVSFVKSYLSTLDSRPIKLRSDHVFDPEQVGLRVPYTLPRLHAPHPEMPKKTKQPLAPGSSKSITVHLKSARNPALEFSLPNTALTTTSVQDLKDAVRERVTDAQGNKISLDKIKILYKRKPVTGKTIAEVLADEPVRLSGGKEVEFGVMIIGGAQVAVSAGAGERASAEQKESYEPPKPAVGPSGESVVATEAFWDDLQGFLEQRLKDYDEANKLRVLFKEAWRSSF.

2 disordered regions span residues 1–35 (MSTVDQSTVTTALSSSSSNRHQGNDTYSIPKHSGT) and 85–105 (LHAPHPEMPKKTKQPLAPGSS). The 91-residue stretch at 108–198 (ITVHLKSARN…VEFGVMIIGG (91 aa)) folds into the Ubiquitin-like domain. The tract at residues 212 to 231 (SAEQKESYEPPKPAVGPSGE) is disordered.

It belongs to the GET5 family. As to quaternary structure, forms homodimers via its C-terminal domain. Component of the get4/get5/sgt2 sorting complex. Binds directly sgt12 homodimers.

The protein resides in the cytoplasm. Component of the get4/get5/sgt2 sorting complex involved in the GET (guided entry of TA proteins) pathway that leads to the insertion of tail-anchored (TA) proteins into the endoplasmic reticulum. Get4 and get5 form an obligate complex that catalyzes the transfer of tail-anchored proteins destined to the endoplasmic reticulum from sgt2 to the cytosolic targeting factor which then targets the TA protein to the ER membrane via get1/get2. In Aspergillus fumigatus (strain ATCC MYA-4609 / CBS 101355 / FGSC A1100 / Af293) (Neosartorya fumigata), this protein is Golgi to ER traffic protein 5.